Reading from the N-terminus, the 377-residue chain is N-acetylgalactosamine-6-phosphate deacetylase (377 aa).

Glu-125 contacts a divalent metal cation. Residue Ala-136 to His-137 coordinates substrate. The a divalent metal cation site is built by His-191 and His-212. Substrate is bound by residues Asn-215–Gly-216, Arg-223, and Asp-244–His-247. Asp-269 (proton donor/acceptor) is an active-site residue. Substrate is bound at residue Leu-302–Gly-304.

The protein belongs to the metallo-dependent hydrolases superfamily. NagA family. A divalent metal cation is required as a cofactor.

It carries out the reaction N-acetyl-D-galactosamine 6-phosphate + H2O = D-galactosamine 6-phosphate + acetate. In terms of biological role, catalyzes the deacetylation of N-acetyl-D-galactosamine 6-phosphate to D-galactosamine 6-phosphate. Can probably also catalyze the deacetylation of N-acetyl-D-glucosamine 6-phosphate to D-glucosamine 6-phosphate. This chain is N-acetylgalactosamine-6-phosphate deacetylase (agaA), found in Escherichia coli O157:H7.